A 451-amino-acid polypeptide reads, in one-letter code: Bifunctional protein GlmU (451 aa).

Positions 1–226 (MVAVAILAAG…YLEISGINDR (226 aa)) are pyrophosphorylase. Residues 7–10 (LAAG), Lys21, Gln73, and 78–79 (GT) contribute to the UDP-N-acetyl-alpha-D-glucosamine site. Asp103 is a binding site for Mg(2+). 4 residues coordinate UDP-N-acetyl-alpha-D-glucosamine: Gly140, Glu155, Asn170, and Asn224. Position 224 (Asn224) interacts with Mg(2+). The segment at 227-247 (KQLATAYDILQNRIKDYWMRA) is linker. The tract at residues 248–451 (GVTLIDPDSI…ISGWRMKTDD (204 aa)) is N-acetyltransferase. 2 residues coordinate UDP-N-acetyl-alpha-D-glucosamine: Arg329 and Lys347. His359 serves as the catalytic Proton acceptor. UDP-N-acetyl-alpha-D-glucosamine is bound by residues Tyr362 and Asn373. Acetyl-CoA is bound by residues Ala376, 382–383 (NY), Ala419, and Arg436.

In the N-terminal section; belongs to the N-acetylglucosamine-1-phosphate uridyltransferase family. The protein in the C-terminal section; belongs to the transferase hexapeptide repeat family. In terms of assembly, homotrimer. Requires Mg(2+) as cofactor.

It localises to the cytoplasm. It catalyses the reaction alpha-D-glucosamine 1-phosphate + acetyl-CoA = N-acetyl-alpha-D-glucosamine 1-phosphate + CoA + H(+). It carries out the reaction N-acetyl-alpha-D-glucosamine 1-phosphate + UTP + H(+) = UDP-N-acetyl-alpha-D-glucosamine + diphosphate. It participates in nucleotide-sugar biosynthesis; UDP-N-acetyl-alpha-D-glucosamine biosynthesis; N-acetyl-alpha-D-glucosamine 1-phosphate from alpha-D-glucosamine 6-phosphate (route II): step 2/2. The protein operates within nucleotide-sugar biosynthesis; UDP-N-acetyl-alpha-D-glucosamine biosynthesis; UDP-N-acetyl-alpha-D-glucosamine from N-acetyl-alpha-D-glucosamine 1-phosphate: step 1/1. Its pathway is bacterial outer membrane biogenesis; LPS lipid A biosynthesis. Catalyzes the last two sequential reactions in the de novo biosynthetic pathway for UDP-N-acetylglucosamine (UDP-GlcNAc). The C-terminal domain catalyzes the transfer of acetyl group from acetyl coenzyme A to glucosamine-1-phosphate (GlcN-1-P) to produce N-acetylglucosamine-1-phosphate (GlcNAc-1-P), which is converted into UDP-GlcNAc by the transfer of uridine 5-monophosphate (from uridine 5-triphosphate), a reaction catalyzed by the N-terminal domain. The polypeptide is Bifunctional protein GlmU (Gloeothece citriformis (strain PCC 7424) (Cyanothece sp. (strain PCC 7424))).